The primary structure comprises 646 residues: ATP-dependent rRNA helicase SPB4 (646 aa).

The Q motif motif lies at 15-43 (WGALTPSLAPWILDYLSSMGFEQPTPVQK). The Helicase ATP-binding domain maps to 46 to 247 (FDIFRGNKDV…TVGLLYPHKI (202 aa)). 59–66 (AVTGSGKT) contributes to the ATP binding site. Positions 195 to 198 (DEAD) match the DEAD box motif. Positions 284–434 (ALCQLLERLE…PLAKPPVSVT (151 aa)) constitute a Helicase C-terminal domain. Composition is skewed to basic and acidic residues over residues 539–548 (KKEKAAREAQ) and 566–581 (NEAWSGKHEHEDVKAA). The disordered stretch occupies residues 539 to 646 (KKEKAAREAQ…GGDEFEGFDD (108 aa)). Positions 572–623 (KHEHEDVKAARREKKRRKREAQRLGDMTEPEREEQRKLDEMIAEVRRRNAEA) form a coiled coil. Residues 582-591 (RREKKRRKRE) show a composition bias toward basic residues. The span at 600–621 (EPEREEQRKLDEMIAEVRRRNA) shows a compositional bias: basic and acidic residues. Residues 622–631 (EAPTPAAQAA) are compositionally biased toward low complexity.

This sequence belongs to the DEAD box helicase family. DDX55/SPB4 subfamily. Component of pre-60S ribosomal complexes.

The protein localises to the nucleus. It localises to the nucleolus. It catalyses the reaction ATP + H2O = ADP + phosphate + H(+). In terms of biological role, ATP-binding RNA helicase involved in the biogenesis of 60S ribosomal subunits. Binds 90S pre-ribosomal particles and dissociates from pre-60S ribosomal particles after processing of 27SB pre-rRNA. Required for the normal formation of 18S rRNA through the processing of pre-rRNAs at sites A0, A1 and A2, and the normal formation of 25S and 5.8S rRNAs through the processing of pre-rRNAs at sites C1 and C2. This chain is ATP-dependent rRNA helicase SPB4, found in Chaetomium globosum (strain ATCC 6205 / CBS 148.51 / DSM 1962 / NBRC 6347 / NRRL 1970) (Soil fungus).